Reading from the N-terminus, the 185-residue chain is GTP cyclohydrolase 1 (185 aa).

C75, H78, and C146 together coordinate Zn(2+).

Belongs to the GTP cyclohydrolase I family. In terms of assembly, toroid-shaped homodecamer, composed of two pentamers of five dimers.

It carries out the reaction GTP + H2O = 7,8-dihydroneopterin 3'-triphosphate + formate + H(+). It functions in the pathway cofactor biosynthesis; 7,8-dihydroneopterin triphosphate biosynthesis; 7,8-dihydroneopterin triphosphate from GTP: step 1/1. The sequence is that of GTP cyclohydrolase 1 from Alkalilimnicola ehrlichii (strain ATCC BAA-1101 / DSM 17681 / MLHE-1).